A 305-amino-acid polypeptide reads, in one-letter code: tRNA dimethylallyltransferase (305 aa).

11–18 (GPTAVGKT) serves as a coordination point for ATP. Residue 13–18 (TAVGKT) coordinates substrate. Residues 36 to 39 (DSMQ) are interaction with substrate tRNA.

The protein belongs to the IPP transferase family. Monomer. Mg(2+) serves as cofactor.

It carries out the reaction adenosine(37) in tRNA + dimethylallyl diphosphate = N(6)-dimethylallyladenosine(37) in tRNA + diphosphate. Its function is as follows. Catalyzes the transfer of a dimethylallyl group onto the adenine at position 37 in tRNAs that read codons beginning with uridine, leading to the formation of N6-(dimethylallyl)adenosine (i(6)A). The sequence is that of tRNA dimethylallyltransferase from Listeria innocua serovar 6a (strain ATCC BAA-680 / CLIP 11262).